A 90-amino-acid chain; its full sequence is Inner kinetochore subunit MHF1 (90 aa).

This sequence belongs to the TAF9 family. CENP-S/MHF1 subfamily. In terms of assembly, the MHF histone-fold complex is a heterotetramer of 2 MHF1-MHF2 heterodimers. Together with MPH1/FANCM, forms the FANCM-MHF complex. Component of the inner kinetochore constitutive centromere-associated network (CCAN) (also known as central kinetochore CTF19 complex in yeast), which is composed of at least AME1, CHL4, CNN1, CTF3, CTF19, IML3, MCM16, MCM21, MCM22, MHF1, MHF2, MIF2, NKP1, NKP2, OKP1 and WIP1.

In terms of biological role, dsDNA-binding component of a FANCM-MHF complex involved in DNA damage repair and genome maintenance. FANCM-MHF promotes gene conversion at blocked replication forks, probably by reversal of the stalled fork. Component of the kinetochore, a multiprotein complex that assembles on centromeric DNA and attaches chromosomes to spindle microtubules, mediating chromosome segregation and sister chromatid segregation during meiosis and mitosis. Component of the inner kinetochore constitutive centromere-associated network (CCAN), which serves as a structural platform for outer kinetochore assembly. In Saccharomyces cerevisiae (strain ATCC 204508 / S288c) (Baker's yeast), this protein is Inner kinetochore subunit MHF1.